Here is a 420-residue protein sequence, read N- to C-terminus: 3-isopropylmalate dehydratase large subunit (420 aa).

Residues cysteine 300, cysteine 361, and cysteine 364 each contribute to the [4Fe-4S] cluster site.

The protein belongs to the aconitase/IPM isomerase family. LeuC type 2 subfamily. As to quaternary structure, heterodimer of LeuC and LeuD. It depends on [4Fe-4S] cluster as a cofactor.

The enzyme catalyses (2R,3S)-3-isopropylmalate = (2S)-2-isopropylmalate. The protein operates within amino-acid biosynthesis; L-leucine biosynthesis; L-leucine from 3-methyl-2-oxobutanoate: step 2/4. In terms of biological role, catalyzes the isomerization between 2-isopropylmalate and 3-isopropylmalate, via the formation of 2-isopropylmaleate. This chain is 3-isopropylmalate dehydratase large subunit, found in Endomicrobium trichonymphae.